Here is an 801-residue protein sequence, read N- to C-terminus: Elongation factor G, mitochondrial (801 aa).

The transit peptide at 1-65 (MRVQSLLRAQ…QKIQNQRRWQ (65 aa)) directs the protein to the mitochondrion. The 288-residue stretch at 100-387 (SRVRNIGIAA…AVCDYLPNPS (288 aa)) folds into the tr-type G domain. GTP-binding positions include 109 to 116 (AHIDSGKT), 185 to 189 (DTPGH), and 239 to 242 (NKMD).

The protein belongs to the TRAFAC class translation factor GTPase superfamily. Classic translation factor GTPase family. EF-G/EF-2 subfamily.

It localises to the mitochondrion. The protein operates within protein biosynthesis; polypeptide chain elongation. In terms of biological role, mitochondrial GTPase that catalyzes the GTP-dependent ribosomal translocation step during translation elongation. During this step, the ribosome changes from the pre-translocational (PRE) to the post-translocational (POST) state as the newly formed A-site-bound peptidyl-tRNA and P-site-bound deacylated tRNA move to the P and E sites, respectively. Catalyzes the coordinated movement of the two tRNA molecules, the mRNA and conformational changes in the ribosome. In Pyrenophora tritici-repentis (strain Pt-1C-BFP) (Wheat tan spot fungus), this protein is Elongation factor G, mitochondrial (mef1).